The primary structure comprises 542 residues: Chaperonin GroEL (542 aa).

ATP contacts are provided by residues 29–32 (TLGP), 86–90 (DGTTT), Gly413, and Asp493.

Belongs to the chaperonin (HSP60) family. In terms of assembly, forms a cylinder of 14 subunits composed of two heptameric rings stacked back-to-back. Interacts with the co-chaperonin GroES.

The protein resides in the cytoplasm. The enzyme catalyses ATP + H2O + a folded polypeptide = ADP + phosphate + an unfolded polypeptide.. In terms of biological role, together with its co-chaperonin GroES, plays an essential role in assisting protein folding. The GroEL-GroES system forms a nano-cage that allows encapsulation of the non-native substrate proteins and provides a physical environment optimized to promote and accelerate protein folding. The chain is Chaperonin GroEL from Elusimicrobium minutum (strain Pei191).